Here is a 350-residue protein sequence, read N- to C-terminus: Holliday junction branch migration complex subunit RuvB (350 aa).

The segment at 4–184 is large ATPase domain (RuvB-L); the sequence is ADRIVTASSR…FGIVQRLEFY (181 aa). Residues Ile-23, Arg-24, Gly-65, Lys-68, Thr-69, Thr-70, 131–133, Arg-174, Tyr-184, and Arg-221 contribute to the ATP site; that span reads EDF. A Mg(2+)-binding site is contributed by Thr-69. The interval 185–255 is small ATPAse domain (RuvB-S); sequence STEDLATIVR…IADLALNMLD (71 aa). The interval 258 to 350 is head domain (RuvB-H); that stretch reads ERGFDHQDRR…TPDLFEGDIV (93 aa). Residues Arg-294, Arg-313, and Arg-318 each contribute to the DNA site.

The protein belongs to the RuvB family. As to quaternary structure, homohexamer. Forms an RuvA(8)-RuvB(12)-Holliday junction (HJ) complex. HJ DNA is sandwiched between 2 RuvA tetramers; dsDNA enters through RuvA and exits via RuvB. An RuvB hexamer assembles on each DNA strand where it exits the tetramer. Each RuvB hexamer is contacted by two RuvA subunits (via domain III) on 2 adjacent RuvB subunits; this complex drives branch migration. In the full resolvosome a probable DNA-RuvA(4)-RuvB(12)-RuvC(2) complex forms which resolves the HJ.

The protein resides in the cytoplasm. It carries out the reaction ATP + H2O = ADP + phosphate + H(+). The RuvA-RuvB-RuvC complex processes Holliday junction (HJ) DNA during genetic recombination and DNA repair, while the RuvA-RuvB complex plays an important role in the rescue of blocked DNA replication forks via replication fork reversal (RFR). RuvA specifically binds to HJ cruciform DNA, conferring on it an open structure. The RuvB hexamer acts as an ATP-dependent pump, pulling dsDNA into and through the RuvAB complex. RuvB forms 2 homohexamers on either side of HJ DNA bound by 1 or 2 RuvA tetramers; 4 subunits per hexamer contact DNA at a time. Coordinated motions by a converter formed by DNA-disengaged RuvB subunits stimulates ATP hydrolysis and nucleotide exchange. Immobilization of the converter enables RuvB to convert the ATP-contained energy into a lever motion, pulling 2 nucleotides of DNA out of the RuvA tetramer per ATP hydrolyzed, thus driving DNA branch migration. The RuvB motors rotate together with the DNA substrate, which together with the progressing nucleotide cycle form the mechanistic basis for DNA recombination by continuous HJ branch migration. Branch migration allows RuvC to scan DNA until it finds its consensus sequence, where it cleaves and resolves cruciform DNA. This chain is Holliday junction branch migration complex subunit RuvB, found in Stutzerimonas stutzeri (strain A1501) (Pseudomonas stutzeri).